Here is a 164-residue protein sequence, read N- to C-terminus: T-cell surface glycoprotein CD3 zeta chain (164 aa).

Residues 1–21 form the signal peptide; that stretch reads MKWKVSVLACILHVRFPGAEA. The residue at position 22 (Q22) is a Blocked amino end (Gln). At 22-30 the chain is on the extracellular side; that stretch reads QSFGLLDPK. The chain crosses the membrane as a helical span at residues 31 to 51; it reads LCYLLDGILFIYGVIITALYL. The Cytoplasmic portion of the chain corresponds to 52 to 164; sequence RAKFSRSAET…ALHMQTLAPR (113 aa). S58 carries the phosphoserine modification. ITAM domains follow at residues 61-89, 100-128, and 131-159; these read TAAN…LEKK, QQRR…EIGT, and ERRR…LHMQ. Phosphotyrosine occurs at positions 72 and 83. A compositionally biased stretch (basic and acidic residues) spans 87–96; the sequence is EKKRARDPEM. Residues 87–111 form a disordered region; it reads EKKRARDPEMGGKQQRRRNPQEGVY. Phosphotyrosine occurs at positions 111, 123, 142, and 153. The tract at residues 124-143 is disordered; sequence SEIGTKGERRRGKGHDGLYQ.

This sequence belongs to the CD3Z/FCER1G family. As to quaternary structure, the TCR-CD3 complex is composed of a CD3D/CD3E and a CD3G/CD3E heterodimers that preferentially associate with TCRalpha and TCRbeta, respectively, to form TCRalpha/CD3E/CD3G and TCRbeta/CD3G/CD3E trimers. In turn, the hexamer interacts with CD3Z homodimer to form the TCR-CD3 complex. Alternatively, TCRalpha and TCRbeta can be replaced by TCRgamma and TCRdelta. Interacts with SLA. Interacts with SLA2. Interacts with TRAT1. Interacts with DOCK2. Interacts with SHB. Interacts with ZAP70. Interacts (tyrosine phosphorylated) with SHC1 (via SH2 domain). Interacts with PTPRC. Interacts with CRK; this interaction regulates CD3Z phosphorylation. Interacts (on T cell side) with CD81, ICAM1 and CD9 at immunological synapses between antigen-presenting cells and T cells. Interacts with CD160. Interacts with LY6E. Interacts with LY6E. The signaling subunit of immunoglobulin gamma (IgG) Fc receptor complex. As a homodimer or a heterodimer with FCER1G, associates with the ligand binding subunit FCGR3A (via transmembrane domain); this interaction is a prerequisite for Fc receptor complex expression on the cell surface. Interacts with CD5. Post-translationally, phosphorylated on Tyr residues after T-cell receptor triggering by LCK in association with CD4/CD8. CD3Z is expressed in normal lymphoid tissue and in peripheral blood mononuclear cells (PBMCs). Expressed also in retinal ganglion cells.

Its subcellular location is the cell membrane. Part of the TCR-CD3 complex present on T-lymphocyte cell surface that plays an essential role in adaptive immune response. When antigen presenting cells (APCs) activate T-cell receptor (TCR), TCR-mediated signals are transmitted across the cell membrane by the CD3 chains CD3D, CD3E, CD3G and CD3Z. All CD3 chains contain immunoreceptor tyrosine-based activation motifs (ITAMs) in their cytoplasmic domain. Upon TCR engagement, these motifs become phosphorylated by Src family protein tyrosine kinases LCK and FYN, resulting in the activation of downstream signaling pathways. CD3Z ITAMs phosphorylation creates multiple docking sites for the protein kinase ZAP70 leading to ZAP70 phosphorylation and its conversion into a catalytically active enzyme. Plays an important role in intrathymic T-cell differentiation. Additionally, participates in the activity-dependent synapse formation of retinal ganglion cells (RGCs) in both the retina and dorsal lateral geniculate nucleus (dLGN). The protein is T-cell surface glycoprotein CD3 zeta chain (Cd247) of Mus musculus (Mouse).